Consider the following 178-residue polypeptide: Large ribosomal subunit protein uL10 (178 aa).

The protein belongs to the universal ribosomal protein uL10 family. Part of the ribosomal stalk of the 50S ribosomal subunit. The N-terminus interacts with L11 and the large rRNA to form the base of the stalk. The C-terminus forms an elongated spine to which L12 dimers bind in a sequential fashion forming a multimeric L10(L12)X complex.

Its function is as follows. Forms part of the ribosomal stalk, playing a central role in the interaction of the ribosome with GTP-bound translation factors. The chain is Large ribosomal subunit protein uL10 from Salinibacter ruber (strain DSM 13855 / M31).